Reading from the N-terminus, the 86-residue chain is Ferredoxin YfhL (86 aa).

2 consecutive 4Fe-4S ferredoxin-type domains span residues Met-1–His-29 and Tyr-31–Ala-65. Cys-9, Cys-12, Cys-15, Cys-19, Cys-38, Cys-41, Cys-50, and Cys-54 together coordinate [4Fe-4S] cluster.

It depends on [4Fe-4S] cluster as a cofactor.

In terms of biological role, ferredoxins are iron-sulfur proteins that transfer electrons in a wide variety of metabolic reactions. In Escherichia coli (strain K12), this protein is Ferredoxin YfhL (yfhL).